Here is a 288-residue protein sequence, read N- to C-terminus: uncharacterized protein (288 aa).

In terms of domain architecture, HTH lysR-type spans 1-59 (MDKLNAISIFCKVIETQSFTLAAKQQNISVAMASKLVSQLEEHLKTRLLQRTTRKIMPT). Residues 19–38 (FTLAAKQQNISVAMASKLVS) constitute a DNA-binding region (H-T-H motif).

Belongs to the LysR transcriptional regulatory family.

This is an uncharacterized protein from Haemophilus influenzae (strain ATCC 51907 / DSM 11121 / KW20 / Rd).